The following is a 154-amino-acid chain: Endoribonuclease YbeY (154 aa).

The Zn(2+) site is built by H113, H117, and H123.

This sequence belongs to the endoribonuclease YbeY family. Zn(2+) serves as cofactor.

It is found in the cytoplasm. Single strand-specific metallo-endoribonuclease involved in late-stage 70S ribosome quality control and in maturation of the 3' terminus of the 16S rRNA. The protein is Endoribonuclease YbeY of Vibrio vulnificus (strain CMCP6).